We begin with the raw amino-acid sequence, 652 residues long: Sodium-dependent phosphate transporter 2 (652 aa).

Over 1 to 5 (MAMDE) the chain is Extracellular. A helical transmembrane segment spans residues 6–26 (YLWMVILGFIIAFILAFSVGA). Residues 27-46 (NDVANSFGTAVGSGVVTLRQ) are Cytoplasmic-facing. Residues 47–67 (ACILASIFETTGSVLLGAKVG) traverse the membrane as a helical segment. Residues 68-86 (ETIRKGIIDVNLYNETVET) lie on the Extracellular side of the membrane. Asn-81 carries an N-linked (GlcNAc...) asparagine glycan. Residues 87 to 107 (LMAGEVSAMVGSAVWQLIASF) form a helical membrane-spanning segment. The Cytoplasmic portion of the chain corresponds to 108-109 (LR). A helical transmembrane segment spans residues 110 to 130 (LPISGTHCIVGSTIGFSLVAI). Residues 131–142 (GTKGVQWMELVK) are Extracellular-facing. Residues 143–163 (IVASWFISPLLSGFMSGLLFV) traverse the membrane as a helical segment. The Cytoplasmic portion of the chain corresponds to 164 to 190 (LIRIFILKKEDPVPNGLRALPVFYAAT). A helical transmembrane segment spans residues 191 to 211 (IAINVFSIMYTGAPVLGLVLP). The Extracellular segment spans residues 212–213 (MW). A helical transmembrane segment spans residues 214–234 (AIALISFGVALLFAFFVWLFV). Residues 235-482 (CPWMRRKITG…EEKEEKDAPE (248 aa)) lie on the Cytoplasmic side of the membrane. Phosphoserine is present on residues Ser-253, Ser-256, Ser-259, and Ser-268. Positions 273-307 (ELPGAKANDDSTIPLTGAAGETLGTSEGTSAGSHP) are disordered. The span at 295–304 (LGTSEGTSAG) shows a compositional bias: polar residues. A phosphoserine mark is found at Ser-316 and Ser-385. The tract at residues 458–477 (SELADPDQPREDPAEEEKEE) is disordered. A helical membrane pass occupies residues 483–503 (VHLLFHFLQVLTACFGSFAHG). The Extracellular portion of the chain corresponds to 504–530 (GNDVSNAIGPLVALWLIYKQGGVTQEA). A helical transmembrane segment spans residues 531–551 (ATPVWLLFYGGVGICTGLWVW). The Cytoplasmic segment spans residues 552-571 (GRRVIQTMGKDLTPITPSSG). A helical membrane pass occupies residues 572-586 (FTIELASAFTVVIAS). Topologically, residues 587 to 593 (NIGLPVS) are extracellular. The helical transmembrane segment at 594-609 (TTHCKVGSVVAVGWIR) threads the bilayer. At 610-621 (SRKAVDWRLFRN) the chain is on the cytoplasmic side. Residues 622–642 (IFVAWFVTVPVAGLFSAAVMA) traverse the membrane as a helical segment. Residues 643–652 (LLMYGILPYV) are Extracellular-facing.

Belongs to the inorganic phosphate transporter (PiT) (TC 2.A.20) family. As to quaternary structure, homodimer. Ubiquitously expressed.

It is found in the cell membrane. Its subcellular location is the apical cell membrane. It catalyses the reaction 2 Na(+)(out) + phosphate(out) = 2 Na(+)(in) + phosphate(in). Sodium-phosphate symporter which preferentially transports the monovalent form of phosphate with a stoichiometry of two sodium ions per phosphate ion. Plays a critical role in the determination of bone quality and strength by providing phosphate for bone mineralization. Required to maintain normal cerebrospinal fluid phosphate levels. Mediates phosphate-induced calcification of vascular smooth muscle cells (VCMCs) and can functionally compensate for loss of SLC20A1 in VCMCs. Its function is as follows. (Microbial infection) Functions as a retroviral receptor and confers human cells susceptibility to infection to amphotropic murine leukemia virus (A-MuLV), 10A1 murine leukemia virus (10A1 MLV) and some feline leukemia virus subgroup B (FeLV-B) variants. The protein is Sodium-dependent phosphate transporter 2 (SLC20A2) of Homo sapiens (Human).